A 179-amino-acid chain; its full sequence is Protein GrpE (179 aa).

Positions 1–45 (MSEEKLTQDPTAEEEQTETADQQESADVNWEQEAAHWKAQAEEHQ) are disordered. The segment covering 33–45 (EAAHWKAQAEEHQ) has biased composition (basic and acidic residues).

Belongs to the GrpE family. Homodimer.

It is found in the cytoplasm. Its function is as follows. Participates actively in the response to hyperosmotic and heat shock by preventing the aggregation of stress-denatured proteins, in association with DnaK and GrpE. It is the nucleotide exchange factor for DnaK and may function as a thermosensor. Unfolded proteins bind initially to DnaJ; upon interaction with the DnaJ-bound protein, DnaK hydrolyzes its bound ATP, resulting in the formation of a stable complex. GrpE releases ADP from DnaK; ATP binding to DnaK triggers the release of the substrate protein, thus completing the reaction cycle. Several rounds of ATP-dependent interactions between DnaJ, DnaK and GrpE are required for fully efficient folding. This Brevibacillus choshinensis protein is Protein GrpE.